The chain runs to 315 residues: Porphobilinogen deaminase (315 aa).

Residue Cys234 is modified to S-(dipyrrolylmethanemethyl)cysteine.

It belongs to the HMBS family. As to quaternary structure, monomer. Dipyrromethane serves as cofactor.

The catalysed reaction is 4 porphobilinogen + H2O = hydroxymethylbilane + 4 NH4(+). It functions in the pathway porphyrin-containing compound metabolism; protoporphyrin-IX biosynthesis; coproporphyrinogen-III from 5-aminolevulinate: step 2/4. Tetrapolymerization of the monopyrrole PBG into the hydroxymethylbilane pre-uroporphyrinogen in several discrete steps. The chain is Porphobilinogen deaminase from Mycolicibacterium paratuberculosis (strain ATCC BAA-968 / K-10) (Mycobacterium paratuberculosis).